The sequence spans 498 residues: Lysine--tRNA ligase (498 aa).

Mg(2+)-binding residues include glutamate 409 and glutamate 416.

This sequence belongs to the class-II aminoacyl-tRNA synthetase family. As to quaternary structure, homodimer. The cofactor is Mg(2+).

It localises to the cytoplasm. It catalyses the reaction tRNA(Lys) + L-lysine + ATP = L-lysyl-tRNA(Lys) + AMP + diphosphate. The chain is Lysine--tRNA ligase from Dichelobacter nodosus (strain VCS1703A).